A 433-amino-acid polypeptide reads, in one-letter code: MSQLRTTKAGLVACGMICAFIFLYLRNPGPEEAEAEAEAEPTNPAVVECGFYPDELCSALFDGKKAAPQIAQFCKPPQNSEVPARLRTPGNCSRLARGLHFITRPLSAEEGNFSLAYVIHAPRELVMFVRLLRAIYAPQNVYCIHSDENAPKKFKSAMQTFVDCFGNIFLSSKTQKVAHDNLRRLQAEIDCMRDLVHSPFQWHYVMNLCGQEFPIKTNKEIIYDIRTRWKGKNITPGVTPPANSKPKTGQGPPKPSPDENSYTAPNTIFKQSPPHNLTISSGSAHYALTRKFVEFVLTDPRAKDMLQWSKDIQSPEKHYWVTLNRLKDAPGATPDAGWEGHIRATKWRTEAGDGRKGCTDHDAQDTCVYGLGDLPGLIRLPAFFATLEPSSDPLVGVCLERRHRLRALQQAEVPPEPHWQFPQQSHFNSQPHH.

Residues 1 to 8 lie on the Cytoplasmic side of the membrane; it reads MSQLRTTK. A helical; Signal-anchor for type II membrane protein membrane pass occupies residues 9–25; sequence AGLVACGMICAFIFLYL. Residues 26–433 lie on the Extracellular side of the membrane; it reads RNPGPEEAEA…QSHFNSQPHH (408 aa). Intrachain disulfides connect Cys-57/Cys-209, Cys-143/Cys-358, Cys-164/Cys-191, and Cys-367/Cys-398. N-linked (GlcNAc...) asparagine glycosylation occurs at Asn-112. Residues 233–275 are disordered; it reads NITPGVTPPANSKPKTGQGPPKPSPDENSYTAPNTIFKQSPPH. Over residues 258 to 275 the composition is skewed to polar residues; it reads DENSYTAPNTIFKQSPPH. The interval 413–433 is disordered; sequence VPPEPHWQFPQQSHFNSQPHH. Residues 421–433 show a composition bias toward polar residues; sequence FPQQSHFNSQPHH.

Belongs to the glycosyltransferase 14 family.

The protein localises to the golgi apparatus membrane. It participates in protein modification; protein glycosylation. In terms of biological role, probable glycosyltransferase. The polypeptide is Probable beta-1,3-galactosyl-O-glycosyl-glycoprotein beta-1,6-N-acetylglucosaminyltransferase 7 (Mus musculus (Mouse)).